The chain runs to 276 residues: Acyl-[acyl-carrier-protein]--UDP-N-acetylglucosamine O-acyltransferase (276 aa).

It belongs to the transferase hexapeptide repeat family. LpxA subfamily. As to quaternary structure, homotrimer.

It is found in the cytoplasm. The enzyme catalyses a (3R)-hydroxyacyl-[ACP] + UDP-N-acetyl-alpha-D-glucosamine = a UDP-3-O-[(3R)-3-hydroxyacyl]-N-acetyl-alpha-D-glucosamine + holo-[ACP]. The protein operates within glycolipid biosynthesis; lipid IV(A) biosynthesis; lipid IV(A) from (3R)-3-hydroxytetradecanoyl-[acyl-carrier-protein] and UDP-N-acetyl-alpha-D-glucosamine: step 1/6. Functionally, involved in the biosynthesis of lipid A, a phosphorylated glycolipid that anchors the lipopolysaccharide to the outer membrane of the cell. The protein is Acyl-[acyl-carrier-protein]--UDP-N-acetylglucosamine O-acyltransferase of Rippkaea orientalis (strain PCC 8801 / RF-1) (Cyanothece sp. (strain PCC 8801)).